Reading from the N-terminus, the 82-residue chain is Progonadoliberin-3 (82 aa).

The signal sequence occupies residues 1–23; sequence MDLSSKTVVQVVMLALIAQVTFS. The residue at position 24 (Gln24) is a Pyrrolidone carboxylic acid. At Gly33 the chain carries Glycine amide.

This sequence belongs to the GnRH family.

Its subcellular location is the secreted. Stimulates the secretion of gonadotropins. This Oncorhynchus masou (Cherry salmon) protein is Progonadoliberin-3 (gnrh3).